Reading from the N-terminus, the 148-residue chain is Deoxyuridine 5'-triphosphate nucleotidohydrolase (148 aa).

Residues 67–69 (RSG), asparagine 80, 84–86 (LID), and methionine 94 contribute to the substrate site.

The protein belongs to the dUTPase family. Mg(2+) serves as cofactor.

It catalyses the reaction dUTP + H2O = dUMP + diphosphate + H(+). It participates in pyrimidine metabolism; dUMP biosynthesis; dUMP from dCTP (dUTP route): step 2/2. Functionally, this enzyme is involved in nucleotide metabolism: it produces dUMP, the immediate precursor of thymidine nucleotides and it decreases the intracellular concentration of dUTP so that uracil cannot be incorporated into DNA. The polypeptide is Deoxyuridine 5'-triphosphate nucleotidohydrolase (Burkholderia ambifaria (strain ATCC BAA-244 / DSM 16087 / CCUG 44356 / LMG 19182 / AMMD) (Burkholderia cepacia (strain AMMD))).